The sequence spans 98 residues: Ferredoxin-like protein (98 aa).

One can recognise a 4Fe-4S ferredoxin-type domain in the interval 57–87 (GQVEVTADGCMECGTCRVLCEANGDVEWSYP).

This sequence to ferredoxins from P.putida and C.tartarivorum, ferredoxin I from A.vinelandii, ferredoxin II from D.desulfuricans.

Could be a 3Fe-4S cluster-containing protein. The protein is Ferredoxin-like protein (fixX) of Rhizobium meliloti (strain 1021) (Ensifer meliloti).